The primary structure comprises 229 residues: MKIKAPVITIDGPSGSGKGTVAGLLARKLGWCLLDSGALYRLLAFAARNHGVDLTNEEALKLLAAHLDVQFEATAAGQGQRIILEGEDVTHAIRNEQVGSGASQVASLPAVRDALLLRQRAFQEEPGLVADGRDMGTVVFPDAPLKIFLTASAEERARRRYLQLKAKGDDVSLSSLLDEICARDERDTQRAVAPLKPAHDAIQLDSTELSIEQVLERILSEIALRGIAG.

ATP is bound at residue 12 to 20; the sequence is GPSGSGKGT.

This sequence belongs to the cytidylate kinase family. Type 1 subfamily.

The protein resides in the cytoplasm. It carries out the reaction CMP + ATP = CDP + ADP. The catalysed reaction is dCMP + ATP = dCDP + ADP. The sequence is that of Cytidylate kinase from Pseudomonas syringae pv. syringae (strain B728a).